Reading from the N-terminus, the 465-residue chain is Hydroxyacid-oxoacid transhydrogenase, mitochondrial (465 aa).

The protein belongs to the iron-containing alcohol dehydrogenase family. Hydroxyacid-oxoacid transhydrogenase subfamily.

The protein resides in the mitochondrion. The enzyme catalyses (S)-3-hydroxybutanoate + 2-oxoglutarate = (R)-2-hydroxyglutarate + acetoacetate. It catalyses the reaction 4-hydroxybutanoate + 2-oxoglutarate = (R)-2-hydroxyglutarate + succinate semialdehyde. Its function is as follows. Catalyzes the cofactor-independent reversible oxidation of gamma-hydroxybutyrate (GHB) to succinic semialdehyde (SSA) coupled to reduction of 2-ketoglutarate (2-KG) to D-2-hydroxyglutarate (D-2-HG). L-3-hydroxybutyrate (L-3-OHB) is also a substrate for HOT when using 2-KG as hydrogen acceptor, resulting in the formation of D-2-HG. This is Hydroxyacid-oxoacid transhydrogenase, mitochondrial from Caenorhabditis briggsae.